The following is a 310-amino-acid chain: GMP synthase [glutamine-hydrolyzing] subunit B (310 aa).

In terms of domain architecture, GMPS ATP-PPase spans 2-185; it reads FKTEPFIEES…LGLPDQIAHR (184 aa). Residue 29–35 participates in ATP binding; the sequence is SGGVDSS.

Heterodimer composed of a glutamine amidotransferase subunit (A) and a GMP-binding subunit (B).

The catalysed reaction is XMP + L-glutamine + ATP + H2O = GMP + L-glutamate + AMP + diphosphate + 2 H(+). The protein operates within purine metabolism; GMP biosynthesis; GMP from XMP (L-Gln route): step 1/1. Catalyzes the synthesis of GMP from XMP. This chain is GMP synthase [glutamine-hydrolyzing] subunit B, found in Methanococcus maripaludis (strain C7 / ATCC BAA-1331).